Reading from the N-terminus, the 283-residue chain is MIIRKCYINNPNPFFTPPKNNKRRPSFICYAMKRASEIDVARCELNYILQIKNIKIGFPVKRFRRLNEHRACAMRAMVLAMLYHFNISSDLVQASVEQLSDECGLSTLSKAGNKSITRASRLITNFMEPMGFVTCKKTWDKILGNYMPKMITLTPLFFMLFGVSEKKLMDAKKQQLGWINKNLISKGFKPITMIDAKRRSKDTQIKNIFQYRISKHAFYKKKRNAQRLISLDEKEARQTILRALVAKYSITELTKLGPNGLKKQVNISYYYLRKIATNTYPDN.

This sequence belongs to the IncFII RepA family.

Functionally, this protein is essential for plasmid replication; it is involved in copy control functions. The polypeptide is Probable replication-associated protein repA1 (repA1) (Buchnera aphidicola subsp. Acyrthosiphon pisum (strain APS) (Acyrthosiphon pisum symbiotic bacterium)).